Consider the following 334-residue polypeptide: Glyceraldehyde-3-phosphate dehydrogenase 2 (334 aa).

Residues 12–13 (RI), Asp-35, and Arg-79 contribute to the NAD(+) site. Residues 152 to 154 (SCT), Thr-183, Arg-198, 211 to 212 (SG), and Arg-234 contribute to the D-glyceraldehyde 3-phosphate site. Cys-153 serves as the catalytic Nucleophile. Asn-315 provides a ligand contact to NAD(+).

This sequence belongs to the glyceraldehyde-3-phosphate dehydrogenase family. As to quaternary structure, homotetramer.

The protein localises to the cytoplasm. It catalyses the reaction D-glyceraldehyde 3-phosphate + phosphate + NAD(+) = (2R)-3-phospho-glyceroyl phosphate + NADH + H(+). It participates in carbohydrate degradation; glycolysis; pyruvate from D-glyceraldehyde 3-phosphate: step 1/5. With respect to regulation, inhibited by pentalenolactone (PL). In terms of biological role, catalyzes the oxidative phosphorylation of glyceraldehyde 3-phosphate (G3P) to 1,3-bisphosphoglycerate (BPG) using the cofactor NAD. The first reaction step involves the formation of a hemiacetal intermediate between G3P and a cysteine residue, and this hemiacetal intermediate is then oxidized to a thioester, with concomitant reduction of NAD to NADH. The reduced NADH is then exchanged with the second NAD, and the thioester is attacked by a nucleophilic inorganic phosphate to produce BPG. The chain is Glyceraldehyde-3-phosphate dehydrogenase 2 (gap2) from Streptomyces arenae.